We begin with the raw amino-acid sequence, 319 residues long: Methionyl-tRNA formyltransferase (319 aa).

113 to 116 (SLLP) is a binding site for (6S)-5,6,7,8-tetrahydrofolate.

It belongs to the Fmt family.

The enzyme catalyses L-methionyl-tRNA(fMet) + (6R)-10-formyltetrahydrofolate = N-formyl-L-methionyl-tRNA(fMet) + (6S)-5,6,7,8-tetrahydrofolate + H(+). In terms of biological role, attaches a formyl group to the free amino group of methionyl-tRNA(fMet). The formyl group appears to play a dual role in the initiator identity of N-formylmethionyl-tRNA by promoting its recognition by IF2 and preventing the misappropriation of this tRNA by the elongation apparatus. The chain is Methionyl-tRNA formyltransferase from Pseudomonas fluorescens (strain Pf0-1).